We begin with the raw amino-acid sequence, 395 residues long: 3-sulfinopropanoyl-CoA desulfinase (395 aa).

FAD contacts are provided by residues 121 to 124 (ICIS), S130, and 153 to 156 (YWIT). 243–244 (YN) serves as a coordination point for substrate. FAD-binding positions include R272, Q339, S343, 366 to 370 (GGTAQ), and Q387.

Belongs to the acyl-CoA dehydrogenase family. As to quaternary structure, homotrimer or homotetramer. Requires FAD as cofactor.

It catalyses the reaction 3-sulfinopropanoyl-CoA + H2O = propanoyl-CoA + sulfite + H(+). Functionally, catalyzes the conversion 3-sulfinopropanoyl-CoA (3SP-CoA) to propanoyl-CoA by abstraction of sulfite. Does not show dehydrogenase activity. This chain is 3-sulfinopropanoyl-CoA desulfinase, found in Cupriavidus necator (strain ATCC 43291 / DSM 13513 / CCUG 52238 / LMG 8453 / N-1) (Ralstonia eutropha).